A 290-amino-acid polypeptide reads, in one-letter code: MYG1 protein CPn_0489/CP_0265/CPj0489/CpB0509 (290 aa).

This sequence belongs to the MYG1 family.

This Chlamydia pneumoniae (Chlamydophila pneumoniae) protein is MYG1 protein CPn_0489/CP_0265/CPj0489/CpB0509.